A 168-amino-acid polypeptide reads, in one-letter code: G/U mismatch-specific DNA glycosylase (168 aa).

Belongs to the uracil-DNA glycosylase (UDG) superfamily. TDG/mug family. Binds DNA as a monomer.

Its subcellular location is the cytoplasm. It carries out the reaction Specifically hydrolyzes mismatched double-stranded DNA and polynucleotides, releasing free uracil.. Functionally, excises ethenocytosine and uracil, which can arise by alkylation or deamination of cytosine, respectively, from the corresponding mispairs with guanine in ds-DNA. It is capable of hydrolyzing the carbon-nitrogen bond between the sugar-phosphate backbone of the DNA and the mispaired base. The complementary strand guanine functions in substrate recognition. Required for DNA damage lesion repair in stationary-phase cells. The polypeptide is G/U mismatch-specific DNA glycosylase (Salmonella gallinarum (strain 287/91 / NCTC 13346)).